A 142-amino-acid chain; its full sequence is Large ribosomal subunit protein uL13 (142 aa).

The protein belongs to the universal ribosomal protein uL13 family. Part of the 50S ribosomal subunit.

Its function is as follows. This protein is one of the early assembly proteins of the 50S ribosomal subunit, although it is not seen to bind rRNA by itself. It is important during the early stages of 50S assembly. This Pseudomonas aeruginosa (strain LESB58) protein is Large ribosomal subunit protein uL13.